Reading from the N-terminus, the 191-residue chain is 7-methyl-GTP pyrophosphatase (191 aa).

Catalysis depends on D70, which acts as the Proton acceptor.

Belongs to the Maf family. YceF subfamily. Requires a divalent metal cation as cofactor.

The protein resides in the cytoplasm. The enzyme catalyses N(7)-methyl-GTP + H2O = N(7)-methyl-GMP + diphosphate + H(+). Nucleoside triphosphate pyrophosphatase that hydrolyzes 7-methyl-GTP (m(7)GTP). May have a dual role in cell division arrest and in preventing the incorporation of modified nucleotides into cellular nucleic acids. The polypeptide is 7-methyl-GTP pyrophosphatase (Xanthomonas oryzae pv. oryzae (strain KACC10331 / KXO85)).